A 699-amino-acid chain; its full sequence is Zinc finger protein 782 (699 aa).

Residues 8-79 form the KRAB domain; the sequence is VSFQDVTVEF…EKEKGFLSRN (72 aa). A disordered region spans residues 75–95; it reads FLSRNSPEDSQPDEISEKSPE. A C2H2-type 1; degenerate zinc finger spans residues 279–307; it reads CFCRITHKTLTGGKSFSQKSHIREHHRVH. The segment at 316–332 adopts a C2H2-type 2; degenerate zinc-finger fold; it reads GKSFNRNSTLPVHQRTH. The segment at 337 to 360 adopts a C2H2-type 3; degenerate zinc-finger fold; the sequence is YSDYHPCTETFSYQSTFSVHQKVH. Residues 366 to 388 form a C2H2-type 4; degenerate zinc finger; it reads YEYNECGKSCSMNSHLIWPQKSH. 11 consecutive C2H2-type zinc fingers follow at residues 394 to 416, 422 to 444, 450 to 472, 478 to 500, 506 to 528, 534 to 556, 562 to 584, 590 to 612, 618 to 640, 646 to 668, and 674 to 696; these read YECPECGKAFSEKSRLRKHQRTH, YKCDGCDKAFSAKSGLRIHQRTH, FECHECGKSFNYKSILIVHQRTH, FECNECGKSFSHMSGLRNHRRTH, YKCDECGKAFKLKSGLRKHHRTH, YKCNQCGKAFGQKSQLRGHHRIH, YKCNHCGEAFSQKSNLRVHHRTH, YQCEECGKTFRQKSNLRGHQRTH, YECNECGKAFSEKSVLRKHQRTH, YNCNQCGEAFSQKSNLRVHQRTH, and YKCDKCGRTFSQKSSLREHQKAH.

It belongs to the krueppel C2H2-type zinc-finger protein family.

It is found in the nucleus. Functionally, may be involved in transcriptional regulation. The sequence is that of Zinc finger protein 782 (ZNF782) from Homo sapiens (Human).